We begin with the raw amino-acid sequence, 1377 residues long: MAYSYTEKKRIRKSFAKRAAVLDAPFLLATQIESFASFLQAETPPESRYNQGLQAAFTSIFPISSHSGNARLEFVQYMLGEPAFDVKECQQRGLTFASPLRARVRLVIMDREAPKETIKEVKEQEVYMGEIPLMTTTGSFVINGTERVIVSQLHRSPGVFFEHDRGKTHSSGKLLFSARIIPYRGSWLDFEFDPKDYLYFRVDRRRKMPVTILLRAIGMTPEEILETFHDFDAFHLSAEGAQFELVPDRLRGEVARFDIVDPTGKVIVARDKRITAKHIRELDQAGIKMIGVPDDFVLGRIIARNVVDPETGELLARANEEITEDLLGKLRDAGVRDLVTLYVNDLDRGAYISSTLRIDETADQWAARVAIYRMMRPGEPPTEEAVEALFQGLFYAPERYDLSTVGRMKFNRRAYPEKIDDKAPGWLKRFYDKVGPHGEEGEGVLANEDILAVIGVLVELRNGRGEIDDIDHLGNRRVRSVGELAENQFRAGLVRVERAVKERLSQAESDNLMPHDLINAKPISAAIKEFFGSSQLSQFMDQTNPLSEITHKRRVSALGPGGLTRERAGFEVRDVHPTHYGRVCPIETPEGPNIGLINSLAVYARTNRHGFLETPYRKVTDGKVTDQIDFLSAIEEGQYVIAQANAEIGGDGALEGDLVSCRHKGEFMLATADQVQYMDVAPGQIVSVAASLIPFLEHDDANRALMGANMQRQAVPCLRPEKPLVGTGIERTVAVDSGTAVQAMRGGVVDYVDAQRVVVRVNDNEALAGEVGVDIYNMIKYTRSNQNTNINQRPVVRVGDLIAKGDVIADGASTDLGELALGQNMLVAFMPWNGYNFEDSILISERVVADDRFTSIHVEELTVVARDTKLGPEEITRDIASLGEAQLSRLDESGIVYIGAEVEAGDVLVGKVTPKGETQLTPEEKLLRAIFGEKASDVKDTSLRVPSGMTGTVIDVQVFTREGIERDKRAQSIIDDQLRSFKTDLADQMRIVERDAFARIQRMIVGQKANGGPKKLAKGAAITAEYLETLEFYHWFDIRMADEELAIQLEAVREGLEKTRKDFEQAFEIKKKKLTQGDELPPDVQKMVKVYLAVKRRLQPGDKMAGRHGNKGVVSKIVPVEDMPYMEDGTPVDIVLNPLGVPSRMNIGQILETHLGWAAKGLGQKIDRLLRANAAAGEVRGLLEEIYNGSGKPEDFSEFTDGDVIELATNLKKGVPFATPVFDGAKEEEIAKMLELAGLPVGGQVTLFDGRTGEAFERKVTVGYKHVLKLHHLVDDKMHARSTGPYSLVTQQPLGGKAQFGGQRFGEMEVWALEAYGAAYTLQEMLTVKSDDVTGRTKVYENIVKGEHKIDSGMPESFNVLVKEIRSLAIDIDLDRE.

It belongs to the RNA polymerase beta chain family. As to quaternary structure, the RNAP catalytic core consists of 2 alpha, 1 beta, 1 beta' and 1 omega subunit. When a sigma factor is associated with the core the holoenzyme is formed, which can initiate transcription.

It carries out the reaction RNA(n) + a ribonucleoside 5'-triphosphate = RNA(n+1) + diphosphate. Its function is as follows. DNA-dependent RNA polymerase catalyzes the transcription of DNA into RNA using the four ribonucleoside triphosphates as substrates. This chain is DNA-directed RNA polymerase subunit beta, found in Azoarcus sp. (strain BH72).